The primary structure comprises 465 residues: Argininosuccinate lyase (465 aa).

It belongs to the lyase 1 family. Argininosuccinate lyase subfamily.

Its subcellular location is the cytoplasm. The enzyme catalyses 2-(N(omega)-L-arginino)succinate = fumarate + L-arginine. Its pathway is amino-acid biosynthesis; L-arginine biosynthesis; L-arginine from L-ornithine and carbamoyl phosphate: step 3/3. The protein is Argininosuccinate lyase of Hyphomonas neptunium (strain ATCC 15444).